The following is a 312-amino-acid chain: MIEFEKPNITKVDESTNYGKFVVEPLERGYGTTLGNSLRRILLSSLPGAAISSIQIDGVLHEFSTIDGVLEDVTQIILNIKKLALKMNTDEDKNIEIDVNGPAKVTAADIVADPDVEVLNPEQYICTVADGGHFHVRMTVKKGRGYVAADQNKSDDMPIGVLPIDSIFTPISRVNYQVESTRVGRRNDFDKLTLDVWTNGSISPREAISLAAKILTEHLDIFVNLTDEAKNAEIMVEKEETHKEKMLEMTIEELDLSVRSYNCLKRAGINTVQELTNKTEADMMKVRNLGRKSLEEVKNKLADLGLGLRKED.

The segment at 1 to 226 (MIEFEKPNIT…EHLDIFVNLT (226 aa)) is alpha N-terminal domain (alpha-NTD). The tract at residues 243 to 312 (KEKMLEMTIE…DLGLGLRKED (70 aa)) is alpha C-terminal domain (alpha-CTD).

It belongs to the RNA polymerase alpha chain family. As to quaternary structure, homodimer. The RNAP catalytic core consists of 2 alpha, 1 beta, 1 beta' and 1 omega subunit. When a sigma factor is associated with the core the holoenzyme is formed, which can initiate transcription.

It carries out the reaction RNA(n) + a ribonucleoside 5'-triphosphate = RNA(n+1) + diphosphate. In terms of biological role, DNA-dependent RNA polymerase catalyzes the transcription of DNA into RNA using the four ribonucleoside triphosphates as substrates. This Lacticaseibacillus casei (strain BL23) (Lactobacillus casei) protein is DNA-directed RNA polymerase subunit alpha.